Here is a 342-residue protein sequence, read N- to C-terminus: Cathepsin B-like cysteine proteinase 2 (342 aa).

The first 18 residues, 1–18 (MKYLVLALCTYLCSQSGA), serve as a signal peptide directing secretion. The propeptide at 19-86 (DENAAQGIPL…VKEDPDPEVD (68 aa)) is activation peptide. The N-linked (GlcNAc...) asparagine glycan is linked to Asn99. 6 disulfides stabilise this stretch: Cys100/Cys128, Cys111/Cys156, Cys147/Cys214, Cys148/Cys152, Cys185/Cys218, and Cys193/Cys205. Cys114 is an active-site residue. Asn138 carries an N-linked (GlcNAc...) asparagine glycan. The N-linked (GlcNAc...) asparagine glycan is linked to Asn198. Residue His285 is part of the active site. Residue Asn296 is glycosylated (N-linked (GlcNAc...) asparagine). The active site involves Asn305.

Belongs to the peptidase C1 family.

In terms of biological role, expression of the protease correlates with blood-feeding and suggests a role for the protease in blood digestion. The protein is Cathepsin B-like cysteine proteinase 2 (AC-2) of Haemonchus contortus (Barber pole worm).